Consider the following 91-residue polypeptide: Small ribosomal subunit protein uS19 (91 aa).

It belongs to the universal ribosomal protein uS19 family.

Protein S19 forms a complex with S13 that binds strongly to the 16S ribosomal RNA. The polypeptide is Small ribosomal subunit protein uS19 (Exiguobacterium sp. (strain ATCC BAA-1283 / AT1b)).